The following is an 853-amino-acid chain: DNA mismatch repair protein MutS (853 aa).

Position 614–621 (G614–S621) interacts with ATP.

The protein belongs to the DNA mismatch repair MutS family.

In terms of biological role, this protein is involved in the repair of mismatches in DNA. It is possible that it carries out the mismatch recognition step. This protein has a weak ATPase activity. The sequence is that of DNA mismatch repair protein MutS from Escherichia coli O7:K1 (strain IAI39 / ExPEC).